A 764-amino-acid polypeptide reads, in one-letter code: 5-methyltetrahydropteroyltriglutamate--homocysteine methyltransferase (764 aa).

5-methyltetrahydropteroyltri-L-glutamate contacts are provided by residues 16–19 and Lys115; that span reads RELK. Residues 435–437 and Glu488 contribute to the L-homocysteine site; that span reads IGS. Residues 435–437 and Glu488 contribute to the L-methionine site; that span reads IGS. 5-methyltetrahydropteroyltri-L-glutamate is bound by residues 519 to 520 and Trp565; that span reads RC. Residue Asp603 participates in L-homocysteine binding. Asp603 provides a ligand contact to L-methionine. Glu609 contributes to the 5-methyltetrahydropteroyltri-L-glutamate binding site. The Zn(2+) site is built by His645, Cys647, and Glu669. The Proton donor role is filled by His698. Cys730 is a Zn(2+) binding site.

It belongs to the vitamin-B12 independent methionine synthase family. The cofactor is Zn(2+).

It carries out the reaction 5-methyltetrahydropteroyltri-L-glutamate + L-homocysteine = tetrahydropteroyltri-L-glutamate + L-methionine. It functions in the pathway amino-acid biosynthesis; L-methionine biosynthesis via de novo pathway; L-methionine from L-homocysteine (MetE route): step 1/1. Functionally, catalyzes the transfer of a methyl group from 5-methyltetrahydrofolate to homocysteine resulting in methionine formation. This Burkholderia thailandensis (strain ATCC 700388 / DSM 13276 / CCUG 48851 / CIP 106301 / E264) protein is 5-methyltetrahydropteroyltriglutamate--homocysteine methyltransferase.